Consider the following 269-residue polypeptide: Formamidopyrimidine-DNA glycosylase (269 aa).

Pro-2 functions as the Schiff-base intermediate with DNA in the catalytic mechanism. The Proton donor role is filled by Glu-3. Residue Lys-57 is the Proton donor; for beta-elimination activity of the active site. His-90, Arg-109, and Lys-150 together coordinate DNA. The FPG-type zinc finger occupies 235-269 (QVYGRKGEPCRVCGTPIVATKHAQRATFYCRHCQK). Arg-259 (proton donor; for delta-elimination activity) is an active-site residue.

This sequence belongs to the FPG family. Monomer. Zn(2+) serves as cofactor.

The catalysed reaction is Hydrolysis of DNA containing ring-opened 7-methylguanine residues, releasing 2,6-diamino-4-hydroxy-5-(N-methyl)formamidopyrimidine.. It catalyses the reaction 2'-deoxyribonucleotide-(2'-deoxyribose 5'-phosphate)-2'-deoxyribonucleotide-DNA = a 3'-end 2'-deoxyribonucleotide-(2,3-dehydro-2,3-deoxyribose 5'-phosphate)-DNA + a 5'-end 5'-phospho-2'-deoxyribonucleoside-DNA + H(+). Functionally, involved in base excision repair of DNA damaged by oxidation or by mutagenic agents. Acts as a DNA glycosylase that recognizes and removes damaged bases. Has a preference for oxidized purines, such as 7,8-dihydro-8-oxoguanine (8-oxoG). Has AP (apurinic/apyrimidinic) lyase activity and introduces nicks in the DNA strand. Cleaves the DNA backbone by beta-delta elimination to generate a single-strand break at the site of the removed base with both 3'- and 5'-phosphates. The protein is Formamidopyrimidine-DNA glycosylase of Salmonella heidelberg (strain SL476).